Consider the following 552-residue polypeptide: Acyl-CoA-dependent acyltransferase MAC1 (552 aa).

This sequence belongs to the trichothecene O-acetyltransferase family.

Its pathway is secondary metabolite biosynthesis. Functionally, acyl-CoA-dependent acyltransferase; part of the gene cluster that mediates the biosynthesis of mannosylerythritol lipids (MELs), surface-active substances that enhance the availability of water-insoluble substrates. Depending on the number of acetyl groups, mannosylerythritol lipids can be differentiated into MEL A (fully acetylated), MEL B and MEL C (monoacetylated at R-6 and R-4, respectively), and the fully deacetylated MEL D. The first step in the pathway is the generation of mannosylerythritol by the glycosyltransferase EMT1 which catalyzes the transfer of GDP-mannose to the C-4 atom of meso-erythritol. This reaction has to be stereospecific, since only mannosyl-D-erythritol is generated. The produced disaccharide is subsequently acylated with fatty acids of various lengths by the acyltransferases MAC1 and MAC2 at positions C-2 and C-3, repectively. The existence of MEL derivatives which carry an acetyl group at C-2 implies that at least MAC1 also accepts acetyl-CoA as a donor. The final step of MEL biosynthesis is the acetylation of the fully acylated mannosylerythritol lipids catalyzed by the acetyl-CoA-dependent acetyltransferase MAT1. MAT1 displays a relaxed regioselectivity and is able to transfer acetylgroups to both positions C-4 and C-6 of the mannosyl moiety. This is Acyl-CoA-dependent acyltransferase MAC1 from Pseudozyma antarctica (strain T-34) (Yeast).